The following is an 884-amino-acid chain: Protein P (884 aa).

The tract at residues 1–184 (MHPFSRLFRN…GKPYSWEHRQ (184 aa)) is terminal protein domain (TP). The interval 185 to 387 (LVQHNGQQHK…YCIHHIVSSL (203 aa)) is spacer. The segment at 299 to 345 (RNSGHTTWFSSASNSNKSRSREKAYSSNSTSKRYSPPLNYEKSDFSS) is disordered. Positions 388 to 729 (DDWGPCTVTG…YEELWPVVRQ (342 aa)) are polymerase/reverse transcriptase domain (RT). In terms of domain architecture, Reverse transcriptase spans 398–639 (DVTIKSPRTP…NHLHFMGYVI (242 aa)). Mg(2+)-binding residues include Asp-470, Asp-590, and Asp-591.

Belongs to the hepadnaviridae P protein family.

It carries out the reaction DNA(n) + a 2'-deoxyribonucleoside 5'-triphosphate = DNA(n+1) + diphosphate. The enzyme catalyses Endonucleolytic cleavage to 5'-phosphomonoester.. Its activity is regulated as follows. Activated by host HSP70 and HSP40 in vitro to be able to bind the epsilon loop of the pgRNA. Because deletion of the RNase H region renders the protein partly chaperone-independent, the chaperones may be needed indirectly to relieve occlusion of the RNA-binding site by this domain. Inhibited by several reverse-transcriptase inhibitors: Lamivudine, Adefovir and Entecavir. Multifunctional enzyme that converts the viral RNA genome into dsDNA in viral cytoplasmic capsids. This enzyme displays a DNA polymerase activity that can copy either DNA or RNA templates, and a ribonuclease H (RNase H) activity that cleaves the RNA strand of RNA-DNA heteroduplexes in a partially processive 3'- to 5'-endonucleasic mode. Neo-synthesized pregenomic RNA (pgRNA) are encapsidated together with the P protein, and reverse-transcribed inside the nucleocapsid. Initiation of reverse-transcription occurs first by binding the epsilon loop on the pgRNA genome, and is initiated by protein priming, thereby the 5'-end of (-)DNA is covalently linked to P protein. Partial (+)DNA is synthesized from the (-)DNA template and generates the relaxed circular DNA (RC-DNA) genome. After budding and infection, the RC-DNA migrates in the nucleus, and is converted into a plasmid-like covalently closed circular DNA (cccDNA). The activity of P protein does not seem to be necessary for cccDNA generation, and is presumably released from (+)DNA by host nuclear DNA repair machinery. The sequence is that of Protein P from Marmota monax (Woodchuck).